The sequence spans 73 residues: uncharacterized protein (73 aa).

A signal peptide spans 1 to 21 (MTLFSSLSSLSTGSLKSSVSS). Low complexity predominate over residues 1-38 (MTLFSSLSSLSTGSLKSSVSSIETGSSSGSFGSNETSG). The interval 1 to 43 (MTLFSSLSSLSTGSLKSSVSSIETGSSSGSFGSNETSGWGSHH) is disordered. Asn-34 is a glycosylation site (N-linked (GlcNAc...) asparagine).

It localises to the secreted. This is an uncharacterized protein from Dictyostelium discoideum (Social amoeba).